The primary structure comprises 427 residues: Acetyl-CoA acetyltransferase, mitochondrial (427 aa).

Residues 1–33 (MAVLAALLRGGARSRSPLLRRLVQEIRYVERSY) constitute a mitochondrion transit peptide. The residue at position 66 (Lys66) is an N6-acetyllysine; alternate. Lys66 is subject to N6-succinyllysine; alternate. An N6-succinyllysine modification is found at Lys78. Cys126 acts as the Acyl-thioester intermediate in catalysis. N6-acetyllysine; alternate is present on residues Lys174, Lys181, Lys190, and Lys202. 4 positions are modified to N6-succinyllysine; alternate: Lys174, Lys181, Lys190, and Lys202. Tyr219 contacts CoA. K(+) is bound at residue Tyr219. Lys223 and Lys230 each carry N6-acetyllysine; alternate. N6-succinyllysine; alternate is present on residues Lys223 and Lys230. Position 243 is an N6-succinyllysine (Lys243). N6-acetyllysine is present on residues Lys251 and Lys257. CoA is bound by residues 258–260 (RVD) and Lys263. An N6-acetyllysine; alternate modification is found at Lys263. The residue at position 263 (Lys263) is an N6-succinyllysine; alternate. Residues Lys266 and Lys268 each carry the N6-succinyllysine modification. An N6-acetyllysine modification is found at Lys273. Residues Ala280, Ala281, and Ala283 each coordinate K(+). Ser284 contacts CoA. Lys338 is subject to N6-acetyllysine. Val381 provides a ligand contact to K(+). Catalysis depends on Cys413, which acts as the Proton donor/acceptor.

The protein belongs to the thiolase-like superfamily. Thiolase family. In terms of assembly, homotetramer. In terms of processing, succinylation at Lys-268, adjacent to a coenzyme A binding site. Desuccinylated by SIRT5.

The protein resides in the mitochondrion. It catalyses the reaction 2 acetyl-CoA = acetoacetyl-CoA + CoA. The catalysed reaction is propanoyl-CoA + acetyl-CoA = 2-methyl-3-oxobutanoyl-CoA + CoA. It participates in lipid metabolism; fatty acid beta-oxidation. Activated by potassium ions, but not sodium ions. Its function is as follows. This is one of the enzymes that catalyzes the last step of the mitochondrial beta-oxidation pathway, an aerobic process breaking down fatty acids into acetyl-CoA. Using free coenzyme A/CoA, catalyzes the thiolytic cleavage of medium- to long-chain 3-oxoacyl-CoAs into acetyl-CoA and a fatty acyl-CoA shortened by two carbon atoms. The activity of the enzyme is reversible and it can also catalyze the condensation of two acetyl-CoA molecules into acetoacetyl-CoA. Thereby, it plays a major role in ketone body metabolism. The polypeptide is Acetyl-CoA acetyltransferase, mitochondrial (ACAT1) (Macaca fascicularis (Crab-eating macaque)).